A 213-amino-acid polypeptide reads, in one-letter code: Ribonuclease HII (213 aa).

Residues 20-209 (ELVAGVDEVG…VRQAYEALEG (190 aa)) enclose the RNase H type-2 domain. The a divalent metal cation site is built by Asp26, Glu27, and Asp118.

This sequence belongs to the RNase HII family. The cofactor is Mn(2+). Mg(2+) serves as cofactor.

It is found in the cytoplasm. It catalyses the reaction Endonucleolytic cleavage to 5'-phosphomonoester.. Its function is as follows. Endonuclease that specifically degrades the RNA of RNA-DNA hybrids. This Pseudomonas fluorescens (strain Pf0-1) protein is Ribonuclease HII.